Here is a 204-residue protein sequence, read N- to C-terminus: dITP/XTP pyrophosphatase (204 aa).

8 to 13 (SNNAHK) lines the substrate pocket. Mg(2+) contacts are provided by Glu-41 and Asp-76. Asp-76 serves as the catalytic Proton acceptor. Residues Ser-77, 159 to 162 (FGYD), Lys-182, and 187 to 188 (HR) contribute to the substrate site.

It belongs to the HAM1 NTPase family. In terms of assembly, homodimer. Requires Mg(2+) as cofactor.

It carries out the reaction XTP + H2O = XMP + diphosphate + H(+). The enzyme catalyses dITP + H2O = dIMP + diphosphate + H(+). It catalyses the reaction ITP + H2O = IMP + diphosphate + H(+). Its function is as follows. Pyrophosphatase that catalyzes the hydrolysis of nucleoside triphosphates to their monophosphate derivatives, with a high preference for the non-canonical purine nucleotides XTP (xanthosine triphosphate), dITP (deoxyinosine triphosphate) and ITP. Seems to function as a house-cleaning enzyme that removes non-canonical purine nucleotides from the nucleotide pool, thus preventing their incorporation into DNA/RNA and avoiding chromosomal lesions. The polypeptide is dITP/XTP pyrophosphatase (Clostridium perfringens (strain 13 / Type A)).